Consider the following 269-residue polypeptide: Shikimate dehydrogenase (NADP(+)) (269 aa).

Residues 14–16 and threonine 61 contribute to the shikimate site; that span reads SKS. Catalysis depends on lysine 65, which acts as the Proton acceptor. NADP(+) is bound at residue glutamate 77. The shikimate site is built by asparagine 86 and aspartate 102. Residues 126 to 130, 150 to 155, and methionine 213 each bind NADP(+); these read GAGGA and NRTYEK. Residue tyrosine 215 participates in shikimate binding. NADP(+) is bound at residue glycine 237.

The protein belongs to the shikimate dehydrogenase family. Homodimer.

It catalyses the reaction shikimate + NADP(+) = 3-dehydroshikimate + NADPH + H(+). The protein operates within metabolic intermediate biosynthesis; chorismate biosynthesis; chorismate from D-erythrose 4-phosphate and phosphoenolpyruvate: step 4/7. In terms of biological role, involved in the biosynthesis of the chorismate, which leads to the biosynthesis of aromatic amino acids. Catalyzes the reversible NADPH linked reduction of 3-dehydroshikimate (DHSA) to yield shikimate (SA). The chain is Shikimate dehydrogenase (NADP(+)) from Aliivibrio fischeri (strain ATCC 700601 / ES114) (Vibrio fischeri).